The sequence spans 316 residues: 2-phospho-L-lactate guanylyltransferase (316 aa).

Residues 72-85 (TGVSTEAVSTSTST) are compositionally biased toward low complexity. Disordered regions lie at residues 72-107 (TGVSTEAVSTSTSTHADTTEHNAASDNYVSQSPTHT) and 119-138 (LRDDDDPDNEASTQERDGDK). Residues 92-107 (HNAASDNYVSQSPTHT) show a composition bias toward polar residues.

It belongs to the CofC family. Homodimer.

The catalysed reaction is (2S)-2-phospholactate + GTP + H(+) = (2S)-lactyl-2-diphospho-5'-guanosine + diphosphate. It functions in the pathway cofactor biosynthesis; coenzyme F420 biosynthesis. Functionally, guanylyltransferase that catalyzes the activation of (2S)-2-phospholactate (2-PL) as (2S)-lactyl-2-diphospho-5'-guanosine, via the condensation of 2-PL with GTP. It is involved in the biosynthesis of coenzyme F420, a hydride carrier cofactor. The sequence is that of 2-phospho-L-lactate guanylyltransferase from Haloquadratum walsbyi (strain DSM 16790 / HBSQ001).